The sequence spans 278 residues: MQIIHTIRELRAWRKNAGKVAFVPTMGNLHEGHLALVREAKKRADNVVVSIFVNRLQFGQGEDFDKYPRTLQQDADKLEAEGVAVVFAPDEKELYPNVEQRYSVEPPNLQNELCGKFRPGHFLGVATVVSKLFNIVAPDVACFGKKDYQQLAVIKGLTEDLNFDVEIVPVDTGRAEDGLALSSRNQYLSAAERDEAPRLYRELKAVAESLAQGSLDYAGLEKRAVQSLTEYGWVVDYVEIRRADTLEVARAGDKKLVVLAAARLGTTRLIDNLEIKLP.

Residue 26–33 (MGNLHEGH) participates in ATP binding. Catalysis depends on histidine 33, which acts as the Proton donor. A (R)-pantoate-binding site is contributed by glutamine 57. Glutamine 57 provides a ligand contact to beta-alanine. 144–147 (GKKD) is a binding site for ATP. Residue glutamine 150 participates in (R)-pantoate binding. ATP contacts are provided by residues glycine 173 and 181 to 184 (LSSR).

Belongs to the pantothenate synthetase family. In terms of assembly, homodimer.

The protein resides in the cytoplasm. It catalyses the reaction (R)-pantoate + beta-alanine + ATP = (R)-pantothenate + AMP + diphosphate + H(+). It participates in cofactor biosynthesis; (R)-pantothenate biosynthesis; (R)-pantothenate from (R)-pantoate and beta-alanine: step 1/1. In terms of biological role, catalyzes the condensation of pantoate with beta-alanine in an ATP-dependent reaction via a pantoyl-adenylate intermediate. This is Pantothenate synthetase from Neisseria meningitidis serogroup C / serotype 2a (strain ATCC 700532 / DSM 15464 / FAM18).